We begin with the raw amino-acid sequence, 316 residues long: Ribosomal RNA small subunit methyltransferase H (316 aa).

S-adenosyl-L-methionine is bound by residues 42–44 (GGH), D62, F86, D104, and Q111.

It belongs to the methyltransferase superfamily. RsmH family.

It localises to the cytoplasm. The enzyme catalyses cytidine(1402) in 16S rRNA + S-adenosyl-L-methionine = N(4)-methylcytidine(1402) in 16S rRNA + S-adenosyl-L-homocysteine + H(+). Specifically methylates the N4 position of cytidine in position 1402 (C1402) of 16S rRNA. The sequence is that of Ribosomal RNA small subunit methyltransferase H from Polynucleobacter asymbioticus (strain DSM 18221 / CIP 109841 / QLW-P1DMWA-1) (Polynucleobacter necessarius subsp. asymbioticus).